The following is a 562-amino-acid chain: Serine/threonine-protein kinase dst3 (562 aa).

The region spanning 23 to 285 is the Protein kinase domain; the sequence is FQIVEVVGSG…AQQLLSHPFI (263 aa). ATP contacts are provided by residues 29-37 and Lys59; that span reads VGSGSFGTV. Catalysis depends on Asp154, which acts as the Proton acceptor. 2 disordered regions span residues 316–339 and 366–562; these read LEEQ…TRAS and SIMR…NVNI. Polar residues predominate over residues 322–339; that stretch reads QRNSSGSKMVSSVPTRAS. 3 stretches are compositionally biased toward low complexity: residues 421–431, 442–454, and 476–494; these read NNNNNNNNTTT, QQQQ…NNNK, and TTPT…TTKT. Residues 495–522 show a composition bias toward polar residues; sequence GSSLNIKPTNNVNRSTISIGQQKSPLQS. Residues 542 to 562 are compositionally biased toward acidic residues; the sequence is EDEEDEEEFNHEDYEEINVNI.

It belongs to the protein kinase superfamily. STE Ser/Thr protein kinase family. STE20 subfamily. It depends on Mg(2+) as a cofactor.

The catalysed reaction is L-seryl-[protein] + ATP = O-phospho-L-seryl-[protein] + ADP + H(+). It carries out the reaction L-threonyl-[protein] + ATP = O-phospho-L-threonyl-[protein] + ADP + H(+). This Dictyostelium discoideum (Social amoeba) protein is Serine/threonine-protein kinase dst3.